The following is a 453-amino-acid chain: MLTENSAVNSGGKSKCEAGACESRVNGDATSVMDLMAVSTSATGQDEFDRNAPRICGVCGDKATGFHFNAMTCEGCKGFFRRSMKRKASFTCPFNGNCTITKDNRRHCQACRLKRCIDIGMMKEFILTDEEVQRKKDLIMKRKEEEAAREARKPRLSDEQMQIINSLVEAHHKTYDDSYSDFVRFRPPVREGPVTRSASRAASLHSLSDASSDSFNHSPESVDTKLNFSNLLMMYQDSGSPDSSEEDQQSRLSMLPHLADLVSYSIQKVIGFAKMIPGFRDLTAEDQIALLKSSAIEIIMLRSNQSFSLEDMSWSCGGPDFKYCINDVTKAGHTLELLEPLVKFQVGLKKLKLHEEEHVLLMAICLLSPDRPGVQDHVRIEALQDRLCDVLQAYIRIQHPGGRLLYAKMIQKLADLRSLNEEHSKQYRSLSFQPEHSMQLTPLVLEVFGSEVS.

Residues 53–128 (PRICGVCGDK…IGMMKEFILT (76 aa)) constitute a DNA-binding region (nuclear receptor). Zn(2+) contacts are provided by Cys-56, Cys-59, Cys-73, Cys-76, Cys-92, Cys-98, Cys-108, and Cys-111. 2 consecutive NR C4-type zinc fingers follow at residues 56 to 76 (CGVCGDKATGFHFNAMTCEGC) and 92 to 111 (CPFNGNCTITKDNRRHCQAC). A hinge region spans residues 129–158 (DEEVQRKKDLIMKRKEEEAAREARKPRLSD). One can recognise an NR LBD domain in the interval 159 to 449 (EQMQIINSLV…LTPLVLEVFG (291 aa)). Calcitriol is bound by residues Tyr-175 and Ser-265. An interaction with coactivator LXXLL motif region spans residues 274 to 292 (KMIPGFRDLTAEDQIALLK). Residues Arg-302, Ser-306, His-333, and His-423 each contribute to the calcitriol site. The 9aaTAD signature appears at 442–450 (PLVLEVFGS).

The protein belongs to the nuclear hormone receptor family. NR1 subfamily. As to quaternary structure, homodimer in the absence of bound vitamin D3. Heterodimer with RXRA after vitamin D3 binding. Interacts with ncoa1 and possibly other coactivators, leading to a strong increase of transcription of target genes. As to expression, detected in embryo 24 to 48 hours after fertilization and in gastrula.

It is found in the nucleus. Its subcellular location is the cytoplasm. Its function is as follows. Nuclear receptor for calcitriol, the active form of vitamin D3 which mediates the action of this vitamin on cells. Enters the nucleus upon vitamin D3 binding where it forms heterodimers with the retinoid X receptor/RXR. The VDR-RXR heterodimers bind to specific response elements on DNA and activate the transcription of vitamin D3-responsive target genes. Recruited to promoters via its interaction with BAZ1B/WSTF which mediates the interaction with acetylated histones, an essential step for VDR-promoter association. Plays a central role in calcium homeostasis. The sequence is that of Vitamin D3 receptor A (vdra) from Danio rerio (Zebrafish).